Reading from the N-terminus, the 1235-residue chain is ATP-dependent DNA helicase mph1 (1235 aa).

Disordered stretches follow at residues 20–78 (LTQA…YRIH) and 96–148 (DEMP…VHSP). A compositionally biased stretch (basic and acidic residues) spans 61–72 (SRSDNDEADEKK). Residues 137-148 (AKTQKQNIVHSP) are compositionally biased toward polar residues. In terms of domain architecture, Helicase ATP-binding spans 272-440 (IVHKGLFNNL…EVIDNLEIAE (169 aa)). Residue 285–292 (LPTGLGKT) coordinates ATP. Residues 388–391 (DEAH) carry the DEAH box motif. In terms of domain architecture, Helicase C-terminal spans 608–784 (KLTYLCDTVL…GSRFTFRHDL (177 aa)). Disordered regions lie at residues 808–827 (NTQD…RKKL), 944–1117 (SRLQ…PPLM), and 1144–1235 (TGAK…DSDE). Residues 947-958 (QRPEDRDNKPYG) are compositionally biased toward basic and acidic residues. A compositionally biased stretch (basic residues) spans 1015-1027 (VAPKKAKPRRGRA). Over residues 1065-1074 (PGERVDRTSD) the composition is skewed to basic and acidic residues. Residues 1075 to 1085 (MEELEADDDSD) show a composition bias toward acidic residues. Polar residues-rich tracts occupy residues 1095-1114 (PTQT…SSSP) and 1146-1159 (AKNS…MTQE). A compositionally biased stretch (low complexity) spans 1160 to 1170 (SSDGGDSMDSD). Positions 1194–1209 (PSSSVFSSGQKATPNM) are enriched in polar residues.

It belongs to the DEAD box helicase family. DEAH subfamily. FANCM sub-subfamily. Interacts with the MHF histone-fold complex to form the FANCM-MHF complex.

The protein resides in the nucleus. It catalyses the reaction ATP + H2O = ADP + phosphate + H(+). In terms of biological role, ATP-dependent DNA helicase involved in DNA damage repair by homologous recombination and in genome maintenance. Capable of unwinding D-loops. Plays a role in limiting crossover recombinants during mitotic DNA double-strand break (DSB) repair. Component of a FANCM-MHF complex which promotes gene conversion at blocked replication forks, probably by reversal of the stalled fork. In Sclerotinia sclerotiorum (strain ATCC 18683 / 1980 / Ss-1) (White mold), this protein is ATP-dependent DNA helicase mph1.